A 492-amino-acid polypeptide reads, in one-letter code: NADH-quinone oxidoreductase subunit N (492 aa).

The next 14 membrane-spanning stretches (helical) occupy residues 16–36, 44–64, 81–101, 111–131, 134–154, 168–188, 210–230, 244–264, 276–296, 306–326, 332–352, 382–402, 423–443, and 463–483; these read LLIPMCISLFGGIILLGVGVF, LYITISMLFVVLNLGFLFLEG, ISLLTQIIMLLATFVLLLFFM, GAEFYALLLFSIAGFAFMASS, LILILLGLETASLCLYALIAL, FIMGALATTFYAFGAMLLYAA, ILVFAGFVFLLCALGFKVTLV, NALLAAFIAIVPKIVTFAVII, AFVEYTLYVIVVLTMTIPNLI, MLAYSSISHSGFVLAAVLINT, VIFFYWFLFLFANIGAFGILW, LAILLTLFMFALAGIPPFCVF, IMAINSIIAGFYYLKLVIYIF, and FALSITAFVSVACLFMVQNLL.

This sequence belongs to the complex I subunit 2 family. NDH-1 is composed of 14 different subunits. Subunits NuoA, H, J, K, L, M, N constitute the membrane sector of the complex.

Its subcellular location is the cell inner membrane. It carries out the reaction a quinone + NADH + 5 H(+)(in) = a quinol + NAD(+) + 4 H(+)(out). Its function is as follows. NDH-1 shuttles electrons from NADH, via FMN and iron-sulfur (Fe-S) centers, to quinones in the respiratory chain. The immediate electron acceptor for the enzyme in this species is believed to be ubiquinone. Couples the redox reaction to proton translocation (for every two electrons transferred, four hydrogen ions are translocated across the cytoplasmic membrane), and thus conserves the redox energy in a proton gradient. The polypeptide is NADH-quinone oxidoreductase subunit N (Helicobacter hepaticus (strain ATCC 51449 / 3B1)).